Here is a 557-residue protein sequence, read N- to C-terminus: MSQRMQQGQPMIIMGEDAQRVKDRDAQEYNIRAARAVAEAVRSTLGPKGMDKMLVDSMGDVTITNDGVTILKEMDIDNPTAEMIVEVAETQEDEAGDGTTTAVAIAGELLKNAEDLLEQDIHPTAIIRGFNLASEKAREEIDDIAERVDPDDEELLKKVAETSMTGKSSELNKELLADLIVRAVRQVTVEANDGSHVVDLENVSIETQTGRSASESELLTGAVIDKDPVHDDMPVQFDEADVLLLNEPVEVEETDIDTNVSIESPDQLQKFLDQEEAQLKQKVDQIVDSGADVVFCQKGIDDLAQHYLAKQGILAVRRTKKSDIRFLKNITGAAVVSDLDSIEAAVLGRASVRRDEAGELFYVEGIGDDVHGVTLLLRGSTDHVVDELERGVQDALDVVASTVADGRVLAGGGAIEVELASRLRNYADSVSGREQLAVEAYADALELVPRVLAENAGLDSIDTLVDLRAAHEDGQVRAGLNVFTGEVEDAFDAGVVETAHAKEQAVASASEAANLVLKIDDIIAAGDLSTGGDDDEEGGAPGGMGGMGGMGGMGGAM.

Residues 527–557 (DLSTGGDDDEEGGAPGGMGGMGGMGGMGGAM) are disordered. Residues 539 to 557 (GAPGGMGGMGGMGGMGGAM) are compositionally biased toward gly residues.

Belongs to the TCP-1 chaperonin family. As to quaternary structure, the thermosome or CCT complex is a oligomeric complex of two octameric double-ring structures; the complex is probably a heterooligomer of CCT1, CCT2 and CCT3 with yet unknown stoichiometry.

Molecular chaperone that assists in the folding or refolding of nascent or denatured proteins along with ATP hydrolysis. ATPase activity is highest in thermosome assemblies containing CCT1:CCT2, followed by assemblies containing CCT1:CCT2:CCT3. Seems to contribute to thermosome ATPase activity. Not required for growth. The protein is Thermosome subunit 2 (cct2) of Haloferax volcanii (strain ATCC 29605 / DSM 3757 / JCM 8879 / NBRC 14742 / NCIMB 2012 / VKM B-1768 / DS2) (Halobacterium volcanii).